Here is a 261-residue protein sequence, read N- to C-terminus: Transcription repressor OFP15 (261 aa).

A disordered region spans residues 1–28 (MKLPFLNKNHSTSSYSSNSSSSSWPWPS). Low complexity predominate over residues 11 to 28 (STSSYSSNSSSSSWPWPS). Positions 112–172 (FSLESDDPYS…FAAFVDLLMN (61 aa)) constitute an OVATE domain.

In terms of assembly, interacts with BLH1 and BLH3. As to expression, expressed in roots, cauline leaves, shoots, flower buds and siliques.

It localises to the nucleus. In terms of biological role, transcriptional repressor that regulates multiple aspects of plant growth and development through the regulation of BEL1-LIKE (BLH) and KNOX TALE (KNAT) homeodomain transcription factors. This chain is Transcription repressor OFP15 (OFP15), found in Arabidopsis thaliana (Mouse-ear cress).